The chain runs to 252 residues: tRNA pseudouridine synthase A (252 aa).

Asp-52 serves as the catalytic Nucleophile. Tyr-111 is a binding site for substrate.

This sequence belongs to the tRNA pseudouridine synthase TruA family. Homodimer.

It catalyses the reaction uridine(38/39/40) in tRNA = pseudouridine(38/39/40) in tRNA. Functionally, formation of pseudouridine at positions 38, 39 and 40 in the anticodon stem and loop of transfer RNAs. The protein is tRNA pseudouridine synthase A of Methylorubrum populi (strain ATCC BAA-705 / NCIMB 13946 / BJ001) (Methylobacterium populi).